A 217-amino-acid polypeptide reads, in one-letter code: 3,4-dihydroxy-2-butanone 4-phosphate synthase (217 aa).

D-ribulose 5-phosphate-binding positions include 37–38, Asp-42, 150–154, and Glu-174; these read RE and RGGHT. Glu-38 lines the Mg(2+) pocket. His-153 is a Mg(2+) binding site.

Belongs to the DHBP synthase family. Homodimer. Mg(2+) is required as a cofactor. The cofactor is Mn(2+).

It carries out the reaction D-ribulose 5-phosphate = (2S)-2-hydroxy-3-oxobutyl phosphate + formate + H(+). It functions in the pathway cofactor biosynthesis; riboflavin biosynthesis; 2-hydroxy-3-oxobutyl phosphate from D-ribulose 5-phosphate: step 1/1. Catalyzes the conversion of D-ribulose 5-phosphate to formate and 3,4-dihydroxy-2-butanone 4-phosphate. The chain is 3,4-dihydroxy-2-butanone 4-phosphate synthase from Salmonella heidelberg (strain SL476).